A 761-amino-acid polypeptide reads, in one-letter code: Phosphoribosylformylglycinamidine synthase subunit PurL (761 aa).

Low complexity predominate over residues 1 to 16 (MTGNPAAPAATSVSPP). A disordered region spans residues 1–21 (MTGNPAAPAATSVSPPAEQPY). Histidine 57 is a catalytic residue. 2 residues coordinate ATP: tyrosine 60 and lysine 101. Glutamate 103 provides a ligand contact to Mg(2+). Residues 104–107 (SHNH) and arginine 126 contribute to the substrate site. The active-site Proton acceptor is histidine 105. A Mg(2+)-binding site is contributed by aspartate 127. Glutamine 252 lines the substrate pocket. Aspartate 280 serves as a coordination point for Mg(2+). Substrate is bound at residue 329-331 (ESQ). Residues asparagine 519 and glycine 556 each coordinate ATP. Asparagine 557 lines the Mg(2+) pocket. Residue serine 559 coordinates substrate.

Belongs to the FGAMS family. As to quaternary structure, monomer. Part of the FGAM synthase complex composed of 1 PurL, 1 PurQ and 2 PurS subunits.

The protein localises to the cytoplasm. The catalysed reaction is N(2)-formyl-N(1)-(5-phospho-beta-D-ribosyl)glycinamide + L-glutamine + ATP + H2O = 2-formamido-N(1)-(5-O-phospho-beta-D-ribosyl)acetamidine + L-glutamate + ADP + phosphate + H(+). It functions in the pathway purine metabolism; IMP biosynthesis via de novo pathway; 5-amino-1-(5-phospho-D-ribosyl)imidazole from N(2)-formyl-N(1)-(5-phospho-D-ribosyl)glycinamide: step 1/2. Functionally, part of the phosphoribosylformylglycinamidine synthase complex involved in the purines biosynthetic pathway. Catalyzes the ATP-dependent conversion of formylglycinamide ribonucleotide (FGAR) and glutamine to yield formylglycinamidine ribonucleotide (FGAM) and glutamate. The FGAM synthase complex is composed of three subunits. PurQ produces an ammonia molecule by converting glutamine to glutamate. PurL transfers the ammonia molecule to FGAR to form FGAM in an ATP-dependent manner. PurS interacts with PurQ and PurL and is thought to assist in the transfer of the ammonia molecule from PurQ to PurL. This Frankia casuarinae (strain DSM 45818 / CECT 9043 / HFP020203 / CcI3) protein is Phosphoribosylformylglycinamidine synthase subunit PurL.